The primary structure comprises 1407 residues: Metabotropic glutamate receptor-like protein P (1407 aa).

The Extracellular segment spans residues Met1–Lys696. 2 N-linked (GlcNAc...) asparagine glycosylation sites follow: Asn43 and Asn58. PbH1 repeat units lie at residues Ile93–Gly118 and Phe129–Asn150. Residues Asn162, Asn179, Asn182, Asn230, Asn241, Asn270, Asn368, Asn391, Asn464, Asn512, Asn539, Asn544, Asn554, Asn571, Asn627, and Asn646 are each glycosylated (N-linked (GlcNAc...) asparagine). The stretch at Ile254 to Thr279 is one PbH1 3 repeat. One copy of the PbH1 4 repeat lies at Gly452–Thr476. A helical membrane pass occupies residues Phe697–Ser717. Over Leu718 to Pro731 the chain is Cytoplasmic. A helical membrane pass occupies residues Leu732–Phe752. At Gly753 to Thr758 the chain is on the extracellular side. Residues Cys759–Ile779 traverse the membrane as a helical segment. Topologically, residues Lys780–Lys806 are cytoplasmic. A helical membrane pass occupies residues Phe807–Pro827. The Extracellular portion of the chain corresponds to Thr828 to Tyr853. Residues Val854–Val874 form a helical membrane-spanning segment. Topologically, residues Cys875–Tyr890 are cytoplasmic. A helical membrane pass occupies residues Ile891 to Val911. Residues Phe912–Asn919 are Extracellular-facing. The chain crosses the membrane as a helical span at residues Phe920 to Ile940. The Cytoplasmic portion of the chain corresponds to Pro941–Lys1407. Over residues Gln991–Gly1004 the composition is skewed to polar residues. Disordered regions lie at residues Gln991–Phe1072, Gly1084–Gly1248, Lys1267–Glu1351, and Phe1369–Lys1407. A compositionally biased stretch (low complexity) spans Arg1005 to Asn1029. Polar residues predominate over residues Met1030–Ile1040. The span at Ser1041–Asn1071 shows a compositional bias: low complexity. Positions Gly1084–Lys1093 are enriched in basic and acidic residues. Composition is skewed to low complexity over residues Pro1099 to Ile1147, Ser1154 to Ser1246, and Ser1276 to Asn1339. Residues Asn1315–Asp1344 are a coiled coil.

The protein belongs to the G-protein coupled receptor 3 family. GABA-B receptor subfamily.

The protein localises to the membrane. The protein is Metabotropic glutamate receptor-like protein P (grlP) of Dictyostelium discoideum (Social amoeba).